The sequence spans 241 residues: Phosphatidylcholine synthase (241 aa).

Topologically, residues 1-15 are cytoplasmic; it reads MKIFNYKRVPYAEIR. A helical transmembrane segment spans residues 16-36; that stretch reads AFSVHILTASGSFLAFLGVVA. Over 37-41 the chain is Periplasmic; the sequence is ASEHR. The chain crosses the membrane as a helical span at residues 42-62; sequence FVDMFWWLGLALLVDGIDGPI. Residues 63–76 lie on the Cytoplasmic side of the membrane; that stretch reads ARKVRVKEVLPNWS. Residues 77-97 traverse the membrane as a helical segment; sequence GDTLDNIIDYVTYVLLPAFAL. Over 98-100 the chain is Periplasmic; it reads YQS. The chain crosses the membrane as a helical span at residues 101–121; it reads GMIGEPLSFVAAGMIVVSSAI. At 122-133 the chain is on the cytoplasmic side; it reads YYADMGMKTDEY. The helical transmembrane segment at 134–154 threads the bilayer; the sequence is FFSGFPVVWNMVVFTLFVMDA. Over 155–159 the chain is Periplasmic; sequence SATTA. Residues 160 to 180 traverse the membrane as a helical segment; that stretch reads MTVVTVSVFLTFLPINFLHPV. Topologically, residues 181-187 are cytoplasmic; that stretch reads RVKRLRP. A helical transmembrane segment spans residues 188–208; it reads LNLLVVAIWCALGGYALLMHF. The Periplasmic portion of the chain corresponds to 209 to 214; it reads ETPTWA. Residues 215–235 traverse the membrane as a helical segment; it reads VIAFVASGIYLYCIGGILQFF. Topologically, residues 236–241 are cytoplasmic; sequence PSLGAK.

The protein belongs to the CDP-alcohol phosphatidyltransferase class-I family. It depends on Mn(2+) as a cofactor.

Its subcellular location is the cell inner membrane. The catalysed reaction is a CDP-1,2-diacyl-sn-glycerol + choline = a 1,2-diacyl-sn-glycero-3-phosphocholine + CMP + H(+). Its function is as follows. Condenses choline with CDP-diglyceride to produce phosphatidylcholine and CMP. Affects motility, biofilm formation and virulence of this bacterium when there is a complete loss of phosphatidylcholine formation due to absence of both the synthase (pcs) and the methylation (pmtA) pathways. This chain is Phosphatidylcholine synthase, found in Agrobacterium fabrum (strain C58 / ATCC 33970) (Agrobacterium tumefaciens (strain C58)).